The sequence spans 52 residues: Dibenzothiophene metabolism operon protein NahQ/DoxH (52 aa).

It participates in aromatic compound metabolism; naphthalene degradation. May be involved in the conversion of 2-hydroxy-4-(2'-oxo-3,5-cyclohexadienyl)-buta-2,4-dienoate to cis-O-hydroxybenzylidenepyruvate. DoxH and DoxJ encode different enzymes that may have interchangeable functions. This is Dibenzothiophene metabolism operon protein NahQ/DoxH (nahQ) from Pseudomonas putida (Arthrobacter siderocapsulatus).